The sequence spans 655 residues: MGVFSIANQHIRFAVKLACAIVLALFIGFHFQLETPRWAVLTAAIVAAGPAFAAGGEPYSGAIRYRGMLRIIGTFIGCIAALIIIISMIRAPLLMILVCCVWAGFCTWISSLVRIENSYAWGLSGYTALIIVITIQTEPLLTPQFALERCSEIVIGIGCAILADLLFSPRSIKQEVDRELDSLLVAQYQLMQLCIKHGDSEEVDNAWGDLVRRTAALEGMRSNLNMESSRWVRANRRLKALNTLSLTLITQSCETYLIQNTRPELITDTFRELFETPVETVQDVHRQLKRMRRVIVWTGERETPVTLYSWVGAATRYLLLKRGVISNTKISATEEEILQGEPVVKVESAERHHAMVNFWRTTLSCVLGTLFWLWTGWTSGNGAMVMIAVVTSLAMRLPNPRMVCIDFIYGTLAALPLGLLYFLVIIPNTQQSMLLLCLSLAVLGFFIGIEVQKRRLGSMGALASTINIIVLDNPMTFHFSQFLDSALGQIVGCMLAFIVILLVRDKSKDRTGRVLLNQFVSAAVSAMTTNAARRKENRLPALYQQLFLLMNKFPGDLPKFRLALTMIIAHQRLRDAPIPVNEDLSVFHRQLRRTADHVISAGNDDKRRRYFGQLLDELDIYQEKLRIWEAPPQVTEPVKRLTGMLHKYQNALTDS.

11 helical membrane-spanning segments follow: residues 13–33 (FAVK…HFQL), 38–58 (WAVL…GGEP), 69–89 (LRII…ISMI), 93–113 (LLMI…SSLV), 121–141 (WGLS…EPLL), 152–172 (EIVI…PRSI), 370–390 (LFWL…IAVV), 407–427 (FIYG…VIIP), 431–451 (QSML…GIEV), 459–479 (MGAL…TFHF), and 482–502 (FLDS…VILL).

Belongs to the aromatic acid exporter ArAE (TC 2.A.85) family.

It is found in the cell inner membrane. Forms an efflux pump with AaeA. Could function as a metabolic relief valve, allowing to eliminate certain compounds when they accumulate to high levels in the cell. In Salmonella arizonae (strain ATCC BAA-731 / CDC346-86 / RSK2980), this protein is p-hydroxybenzoic acid efflux pump subunit AaeB.